A 221-amino-acid chain; its full sequence is uncharacterized protein (221 aa).

2 stretches are compositionally biased toward low complexity: residues 1–27 (MNNNNNNNNNNNNNNNNNNNNNNNNNN) and 140–162 (TTTSSTTTTTTTTSTTTTNNSSS). Disordered regions lie at residues 1–28 (MNNNNNNNNNNNNNNNNNNNNNNNNNNE) and 140–205 (TTTS…NIGG).

This is an uncharacterized protein from Dictyostelium discoideum (Social amoeba).